We begin with the raw amino-acid sequence, 731 residues long: MNADIDLFSYLNPEKQDLSALAPKDLSREQAVIELERLAKLISHYDHLYHDKDNPAVPDSEYDALVLRNRRIEQFFPDLIRPDSPSKKVGSRPNSRLPKIAHRAAMLSLDNGFLDQDVEDFLGRVRRFFNLKENQAVICTVEPKIDGLSCSLRYEKGILTQAVTRGDGVIGEDVTPNVRVIDDIPKTLKGDNWPEIIEIRGEVYMAKSDFAALNARQTEENKKLFANPRNAAAGSLRQLDPNITARRSLRFLAHGWGEATSLPADTQYGMMKVIESYGLSVSNLLARADDIGQMLDFYQKIEAERADLDFDIDGVVYKLDQLDWQQRFGFSARAPRFALAHKFPAEKAQTTLLDIEIQVGRTGVLTPVAKLEPVTVGGVVVSSATLHNSDEIERLGVRPGDRVLVQRAGDVIPQIVENLTPDVDRPIWRFPHRCPVCDSVARREEGEVAWRCTGGLICPAQRVERLCHFVSRTAFEIEGLGKSHIESFFADKLIETPADIFRLFQKRQLLIEREGWGELSVDNLISAIDKRRKVPFDRFLFALGIRHVGAVTARDLAKSYQTWDNFKAAIDEAAHLRTILQPSSEESEEKYQKRVDKELISFFHIPNMGGKIIRSLLDFFAETHNSDVVSDLLQEVQIEPLYFELASSPLSGKIIVFTGSLQKITRDEAKRQAENLGAKVASSVSKKTNLVVAGEAAGSKLSKAKELDISIIDEDRWHRIVENDGQDSIKI.

NAD(+) contacts are provided by residues 59–63, 108–109, and Glu142; these read DSEYD and SL. The active-site N6-AMP-lysine intermediate is the Lys144. Arg165, Glu202, Lys318, and Lys342 together coordinate NAD(+). Residues Cys434, Cys437, Cys452, and Cys458 each contribute to the Zn(2+) site. A BRCT domain is found at 645 to 731; sequence LASSPLSGKI…ENDGQDSIKI (87 aa).

It belongs to the NAD-dependent DNA ligase family. LigA subfamily. Requires Mg(2+) as cofactor. Mn(2+) is required as a cofactor.

It carries out the reaction NAD(+) + (deoxyribonucleotide)n-3'-hydroxyl + 5'-phospho-(deoxyribonucleotide)m = (deoxyribonucleotide)n+m + AMP + beta-nicotinamide D-nucleotide.. Functionally, DNA ligase that catalyzes the formation of phosphodiester linkages between 5'-phosphoryl and 3'-hydroxyl groups in double-stranded DNA using NAD as a coenzyme and as the energy source for the reaction. It is essential for DNA replication and repair of damaged DNA. The protein is DNA ligase of Zymomonas mobilis subsp. mobilis (strain ATCC 31821 / ZM4 / CP4).